The primary structure comprises 381 residues: Cobalt-precorrin-5B C(1)-methyltransferase (381 aa).

The protein belongs to the CbiD family.

The enzyme catalyses Co-precorrin-5B + S-adenosyl-L-methionine = Co-precorrin-6A + S-adenosyl-L-homocysteine. It participates in cofactor biosynthesis; adenosylcobalamin biosynthesis; cob(II)yrinate a,c-diamide from sirohydrochlorin (anaerobic route): step 6/10. Functionally, catalyzes the methylation of C-1 in cobalt-precorrin-5B to form cobalt-precorrin-6A. The protein is Cobalt-precorrin-5B C(1)-methyltransferase of Clostridium botulinum (strain Alaska E43 / Type E3).